The primary structure comprises 335 residues: Pyridoxal 5'-phosphate synthase subunit PdxS (335 aa).

Asp-30 serves as a coordination point for D-ribose 5-phosphate. Lys-87 serves as the catalytic Schiff-base intermediate with D-ribose 5-phosphate. Gly-159 provides a ligand contact to D-ribose 5-phosphate. D-glyceraldehyde 3-phosphate is bound at residue Arg-171. Residues Gly-257 and Gly-278–Ser-279 each bind D-ribose 5-phosphate.

Belongs to the PdxS/SNZ family. In the presence of PdxT, forms a dodecamer of heterodimers.

It carries out the reaction aldehydo-D-ribose 5-phosphate + D-glyceraldehyde 3-phosphate + L-glutamine = pyridoxal 5'-phosphate + L-glutamate + phosphate + 3 H2O + H(+). Its pathway is cofactor biosynthesis; pyridoxal 5'-phosphate biosynthesis. In terms of biological role, catalyzes the formation of pyridoxal 5'-phosphate from ribose 5-phosphate (RBP), glyceraldehyde 3-phosphate (G3P) and ammonia. The ammonia is provided by the PdxT subunit. Can also use ribulose 5-phosphate and dihydroxyacetone phosphate as substrates, resulting from enzyme-catalyzed isomerization of RBP and G3P, respectively. This is Pyridoxal 5'-phosphate synthase subunit PdxS from Thermococcus onnurineus (strain NA1).